Reading from the N-terminus, the 330-residue chain is Putative 1-aminocyclopropane-1-carboxylate deaminase (330 aa).

Residue lysine 54 is modified to N6-(pyridoxal phosphate)lysine.

It belongs to the ACC deaminase/D-cysteine desulfhydrase family. It depends on pyridoxal 5'-phosphate as a cofactor.

It catalyses the reaction 1-aminocyclopropane-1-carboxylate + H2O = 2-oxobutanoate + NH4(+). The chain is Putative 1-aminocyclopropane-1-carboxylate deaminase from Pyrococcus abyssi (strain GE5 / Orsay).